The chain runs to 2465 residues: Protein DOP1A (2465 aa).

Disordered stretches follow at residues 559–600 (PSGQ…SSES), 625–646 (GAAA…TVGS), and 705–733 (TEHQ…KEKN). The span at 633-646 (STSSETETASTVGS) shows a compositional bias: low complexity. Positions 707–733 (HQGDLGREQGETSKWDRNSQGDVKEKN) are enriched in basic and acidic residues. Ser-1266 bears the Phosphoserine mark. Composition is skewed to basic and acidic residues over residues 1282–1291 (EKETIVKESG) and 1305–1315 (KKDDDKKKSSN). The tract at residues 1282–1315 (EKETIVKESGKQPGAKPKVKLARKKDDDKKKSSN) is disordered.

The protein belongs to the DOP1 family.

It localises to the golgi apparatus membrane. Functionally, may be involved in protein traffic between late Golgi and early endosomes. This chain is Protein DOP1A, found in Homo sapiens (Human).